The chain runs to 246 residues: MAGHSKWANIKHRKAAQDAQRGKIFTKLIRELVTAAKIGGGDVSANPRLRSAVDKALSNNMTRDTINRAIERGVGGGDDTNMETKIYEGYGPGGTAVMVECLSDNANRTISQVRPSFTKCGGNLGTEGSVGYLFSKKGLILIASGDEDALTEAAIEAGADDIQPQEDGSFEVYTAWEDLGSVRDGIEAAGFKIQEAEVTMIPSTTVELDAETAPKLLDLINRLEDCDDVQNVYHNGEISDEVAALL.

The protein belongs to the TACO1 family.

It is found in the cytoplasm. The protein is Probable transcriptional regulatory protein APJL_1171 of Actinobacillus pleuropneumoniae serotype 3 (strain JL03).